The sequence spans 20 residues: Maximin-Hu (20 aa).

It belongs to the bombinin family. Expressed by the skin glands.

It is found in the secreted. Has antimicrobial activity. This is Maximin-Hu from Bombina maxima (Giant fire-bellied toad).